Consider the following 291-residue polypeptide: Ribosome maturation factor RimP (291 aa).

The segment at 188–291 is disordered; it reads ERGLGEDEEF…GGKPKAKETH (104 aa). Residues 193–211 show a composition bias toward acidic residues; it reads EDEEFEDDADEVFEGDEAD. 2 stretches are compositionally biased toward basic and acidic residues: residues 212–237 and 245–254; these read EKAAKDAANAERANAKKAADKAEKRA and AKSEKAEKSQ.

It belongs to the RimP family.

Its subcellular location is the cytoplasm. Functionally, required for maturation of 30S ribosomal subunits. This is Ribosome maturation factor RimP from Azorhizobium caulinodans (strain ATCC 43989 / DSM 5975 / JCM 20966 / LMG 6465 / NBRC 14845 / NCIMB 13405 / ORS 571).